Reading from the N-terminus, the 258-residue chain is Aquaglyceroporin (258 aa).

Residues 1–11 are Cytoplasmic-facing; the sequence is MHMLFYKSYVR. Residues 12–32 traverse the membrane as a helical segment; it reads EFIGEFLGTFVLMFLGEGATA. The Extracellular portion of the chain corresponds to 33–45; it reads NFHTTGLSGDWYK. A helical transmembrane segment spans residues 46–66; that stretch reads LCLGWGLAVFFGILVSAKLSG. Residues G66, A67, and N70 each contribute to the glycerol site. Over 67–87 the chain is Cytoplasmic; sequence AHLNLAVSIGLSSINKFDLKK. The helical transmembrane segment at 88–108 threads the bilayer; the sequence is IPVYFFAQLLGAFVGTSTVYG. Residues 109–135 lie on the Extracellular side of the membrane; that stretch reads LYHGFISNSKIPQFAWETSRNPSISLT. Position 127 (S127) interacts with glycerol. Residues 136 to 156 traverse the membrane as a helical segment; sequence GAFFNELILTGILLLVILVVV. Over 157 to 171 the chain is Cytoplasmic; the sequence is DENICGKFHILKLSS. Residues 172–192 form a helical membrane-spanning segment; the sequence is VVGLIILCIGITFGGNTGFAL. Positions 189, 190, 193, and 196 each coordinate glycerol. Residues 193 to 217 lie on the Extracellular side of the membrane; it reads NPSRDLGSRFLSLIAYGKDTFTKDN. The chain crosses the membrane as a helical span at residues 218–238; that stretch reads FYFWVPLVAPCVGSVVFCQFY. Over 239-258 the chain is Cytoplasmic; it reads DKVICPLVDLANNEKDGVDL.

This sequence belongs to the MIP/aquaporin (TC 1.A.8) family. As to quaternary structure, homotetramer.

Its subcellular location is the cell membrane. It catalyses the reaction H2O(in) = H2O(out). The enzyme catalyses glycerol(in) = glycerol(out). It carries out the reaction urea(in) = urea(out). The catalysed reaction is NH4(+)(in) = NH4(+)(out). It catalyses the reaction methylamine(out) = methylamine(in). The enzyme catalyses formamide(out) = formamide(in). Its function is as follows. Mediates water and glycerol transport across the cell membrane. Permeable to sugar alcohols of up to five carbons and urea. Permeable to ammonia, methylamine and formamide. This chain is Aquaglyceroporin, found in Plasmodium falciparum (isolate 3D7).